The primary structure comprises 174 residues: NADH-ubiquinone oxidoreductase chain 6 (174 aa).

5 helical membrane passes run Leu4–Leu24, Ser25–Val45, Phe48–Tyr68, Phe82–Ile102, and Leu143–Thr163.

This sequence belongs to the complex I subunit 6 family.

Its subcellular location is the mitochondrion membrane. It carries out the reaction a ubiquinone + NADH + 5 H(+)(in) = a ubiquinol + NAD(+) + 4 H(+)(out). In terms of biological role, core subunit of the mitochondrial membrane respiratory chain NADH dehydrogenase (Complex I) that is believed to belong to the minimal assembly required for catalysis. Complex I functions in the transfer of electrons from NADH to the respiratory chain. The immediate electron acceptor for the enzyme is believed to be ubiquinone. The protein is NADH-ubiquinone oxidoreductase chain 6 (ND6) of Anopheles quadrimaculatus (Common malaria mosquito).